A 391-amino-acid chain; its full sequence is Multidrug resistance protein MdtL (391 aa).

The next 12 helical transmembrane spans lie at 4–24 (FLIC…MYLV), 42–62 (IAFS…GKVA), 69–89 (PVAI…SLAE), 93–113 (LFLA…VVAF), 134–154 (GITC…MLNF), 158–178 (SLFW…LFIL), 203–222 (FFLS…LTFV), 245–265 (ALTA…LGIF), 269–289 (TLMI…AVSP), 293–313 (VSLF…GVAM), 331–351 (LGIA…VVGI), and 356–376 (MLIG…MFVA).

This sequence belongs to the major facilitator superfamily. DHA1 family. MdtL (TC 2.A.1.2.22) subfamily.

It is found in the cell inner membrane. Functionally, confers resistance to chloramphenicol. This chain is Multidrug resistance protein MdtL, found in Escherichia coli O81 (strain ED1a).